Here is a 1533-residue protein sequence, read N- to C-terminus: Actin cytoskeleton-regulatory complex protein pan-1 (1533 aa).

A disordered region spans residues 1–204 (MYSNSNAFLG…PPPPVKPQAT (204 aa)). Low complexity-rich tracts occupy residues 19-46 (QQPQ…QPTG), 53-136 (GFAP…FQTG), 143-170 (IPQQ…QPQP), and 177-193 (QIQA…QGGI). The 90-residue stretch at 244–333 (DQARFETLFK…DHIKNEVSSM (90 aa)) folds into the EH 1 domain. Residues 277–312 (LDGDSLSQIWTLADTTRSGQLHFPEFALAMYLCNLK) form the EF-hand 1 domain. Positions 345–359 (AGSSSAPASNAPSFA) are enriched in low complexity. Disordered regions lie at residues 345-378 (AGSS…PQPS) and 393-423 (QQTG…GYAG). Composition is skewed to polar residues over residues 360–378 (TQQN…PQPS) and 393–410 (QQTG…QQTG). The region spanning 513–602 (EKTRYDALFR…PELVPPSARN (90 aa)) is the EH 2 domain. The EF-hand 2 domain maps to 546-581 (LDKPDLERIWTLADNGNKGRLDLDEFAVAMHLIYRK). The span at 649-664 (NRKDATVFKNNDEEVG) shows a compositional bias: basic and acidic residues. Disordered stretches follow at residues 649-691 (NRKD…GDDL), 894-917 (IEDS…WEDA), 935-1306 (SRAA…STNP), and 1334-1533 (DAIS…RVLD). Residues 690–890 (DLTIEQLRKK…RDVEDSVREF (201 aa)) are a coiled coil. Basic and acidic residues-rich tracts occupy residues 894-916 (IEDS…RWED) and 935-947 (SRAA…DRQG). Residues 968–982 (TPSPSISRTSTPAST) show a composition bias toward low complexity. Residues 1026 to 1209 (ETAAQRAERE…KQLEAIDDED (184 aa)) are a coiled coil. 3 stretches are compositionally biased toward basic and acidic residues: residues 1031-1063 (RAER…KLAE), 1090-1164 (GKAD…EEEK), and 1173-1203 (EAKE…KQLE). The segment covering 1204–1218 (AIDDEDSSSSDEEGP) has biased composition (acidic residues). A compositionally biased stretch (polar residues) spans 1221 to 1237 (ITPQASTPTVGGSQVGT). Positions 1279-1293 (SQSSEASTSSVAAPV) are enriched in low complexity. Residues 1348–1367 (DDDDDDWGSEKGSDDEDSDD) show a composition bias toward acidic residues. Pro residues predominate over residues 1412-1495 (SSPPPPPAPV…PPPGGAPAPS (84 aa)). Residues 1500–1517 (RPAGLLGEIQAGRALKKT) form the WH2 domain.

Belongs to the PAN1 family. Component of the PAN1 actin cytoskeleton-regulatory complex.

It localises to the cell membrane. The protein localises to the endosome membrane. The protein resides in the cytoplasm. It is found in the cytoskeleton. Its subcellular location is the actin patch. Its function is as follows. Component of the PAN1 actin cytoskeleton-regulatory complex required for the internalization of endosomes during actin-coupled endocytosis. The complex links the site of endocytosis to the cell membrane-associated actin cytoskeleton. Mediates uptake of external molecules and vacuolar degradation of plasma membrane proteins. Plays a role in the proper organization of the cell membrane-associated actin cytoskeleton and promotes its destabilization. In Neurospora crassa (strain ATCC 24698 / 74-OR23-1A / CBS 708.71 / DSM 1257 / FGSC 987), this protein is Actin cytoskeleton-regulatory complex protein pan-1 (pan-1).